Reading from the N-terminus, the 20-residue chain is Putative beta-neurotoxin (20 aa).

Residues 1–20 (KDGYLVGSDGCKYSCLTRPG) enclose the LCN-type CS-alpha/beta domain.

Expressed by the venom gland.

It is found in the secreted. Functionally, beta toxins bind voltage-independently at site-4 of sodium channels (Nav) and shift the voltage of activation toward more negative potentials thereby affecting sodium channel activation and promoting spontaneous and repetitive firing. This is Putative beta-neurotoxin from Tityus pachyurus (Colombian scorpion).